A 382-amino-acid chain; its full sequence is Galactokinase (382 aa).

Position 34 to 37 (E34 to D37) interacts with substrate. Residue G124–S130 participates in ATP binding. Mg(2+) contacts are provided by S130 and E162. Residue D174 is the Proton acceptor of the active site. Y223 is a substrate binding site.

The protein belongs to the GHMP kinase family. GalK subfamily.

The protein localises to the cytoplasm. The catalysed reaction is alpha-D-galactose + ATP = alpha-D-galactose 1-phosphate + ADP + H(+). The protein operates within carbohydrate metabolism; galactose metabolism. Its function is as follows. Catalyzes the transfer of the gamma-phosphate of ATP to D-galactose to form alpha-D-galactose-1-phosphate (Gal-1-P). This is Galactokinase from Salmonella agona (strain SL483).